The primary structure comprises 270 residues: 2-C-methyl-D-erythritol 4-phosphate cytidylyltransferase (270 aa).

Residues 1-33 form a disordered region; it reads MSDESRPSPAETPATTFAETSAETSAAGRSPAR. Over residues 7–27 the composition is skewed to low complexity; sequence PSPAETPATTFAETSAETSAA.

The protein belongs to the IspD/TarI cytidylyltransferase family. IspD subfamily.

It carries out the reaction 2-C-methyl-D-erythritol 4-phosphate + CTP + H(+) = 4-CDP-2-C-methyl-D-erythritol + diphosphate. It functions in the pathway isoprenoid biosynthesis; isopentenyl diphosphate biosynthesis via DXP pathway; isopentenyl diphosphate from 1-deoxy-D-xylulose 5-phosphate: step 2/6. Catalyzes the formation of 4-diphosphocytidyl-2-C-methyl-D-erythritol from CTP and 2-C-methyl-D-erythritol 4-phosphate (MEP). This chain is 2-C-methyl-D-erythritol 4-phosphate cytidylyltransferase, found in Streptomyces coelicolor (strain ATCC BAA-471 / A3(2) / M145).